The chain runs to 78 residues: Major outer membrane lipoprotein Lpp (78 aa).

The first 20 residues, Met1–Gly20, serve as a signal peptide directing secretion. The N-palmitoyl cysteine moiety is linked to residue Cys21. The S-diacylglycerol cysteine moiety is linked to residue Cys21. 2 repeats span residues Asn24 to Val34 and Asn38 to Val48. Positions Ile27 to Ala75 form a coiled coil. An N6-murein peptidoglycan lysine modification is found at Lys78.

Belongs to the Lpp family. In terms of assembly, homotrimer.

The protein localises to the cell outer membrane. It is found in the secreted. It localises to the cell wall. Its function is as follows. A highly abundant outer membrane lipoprotein that controls the distance between the inner and outer membranes. The only protein known to be covalently linked to the peptidoglycan network (PGN). Also non-covalently binds the PGN. The link between the cell outer membrane and PGN contributes to maintenance of the structural and functional integrity of the cell envelope, and maintains the correct distance between the PGN and the outer membrane. This chain is Major outer membrane lipoprotein Lpp, found in Yersinia pestis.